The chain runs to 620 residues: Long-chain fatty acid transport protein 2 (620 aa).

Topologically, residues 1–4 are lumenal; it reads MLSA. Residues 5–27 form a helical membrane-spanning segment; sequence IYTVLAGLLFLPLLVNLCCPYFF. Residues 28-106 lie on the Cytoplasmic side of the membrane; the sequence is QDIGYFLKVA…DHLGLRQGDC (79 aa). Residues 107-127 form a helical membrane-spanning segment; sequence VALLMGNEPAYVWLWLGLVKL. At 128–261 the chain is on the lumenal side; that stretch reads GCAMACLNYN…SGLKADDVIY (134 aa). 222 to 233 contributes to the AMP binding site; the sequence is YIYTSGTTGLPK. The helical transmembrane segment at 262–282 threads the bilayer; it reads ITLPFYHSAALLIGIHGCIVA. The Cytoplasmic segment spans residues 283-620; it reads GATLALRTKF…NAISAKTLKL (338 aa). Residue Lys-291 is modified to N6-acetyllysine. Phosphothreonine is present on Thr-577.

This sequence belongs to the ATP-dependent AMP-binding enzyme family. In terms of tissue distribution, expressed in liver, kidney, placenta, intestine, brain, heart, and colon. Predominantly expressed in liver. Expressed in liver, placenta, and intestine, but much lower relative to isoform 1.

It localises to the endoplasmic reticulum membrane. It is found in the peroxisome membrane. Its subcellular location is the cell membrane. The protein resides in the microsome. It catalyses the reaction a fatty acid(in) = a fatty acid(out). The catalysed reaction is (9Z)-octadecenoate(out) = (9Z)-octadecenoate(in). It carries out the reaction a long-chain fatty acid + ATP + CoA = a long-chain fatty acyl-CoA + AMP + diphosphate. The enzyme catalyses (5Z,8Z,11Z,14Z)-eicosatetraenoate + ATP + CoA = (5Z,8Z,11Z,14Z)-eicosatetraenoyl-CoA + AMP + diphosphate. It catalyses the reaction hexadecanoate + ATP + CoA = hexadecanoyl-CoA + AMP + diphosphate. The catalysed reaction is (9Z)-octadecenoate + ATP + CoA = (9Z)-octadecenoyl-CoA + AMP + diphosphate. It carries out the reaction 3,7,11,15-tetramethylhexadecanoate + ATP + CoA = phytanoyl-CoA + AMP + diphosphate. The enzyme catalyses (9Z,12Z,15Z)-octadecatrienoate + ATP + CoA = (9Z,12Z,15Z)-octadecatrienoyl-CoA + AMP + diphosphate. It catalyses the reaction 2,6,10,14-tetramethylpentadecanoate + ATP + CoA = pristanoyl-CoA + AMP + diphosphate. The catalysed reaction is (E)-hexadec-2-enoate + ATP + CoA = (2E)-hexadecenoyl-CoA + AMP + diphosphate. It carries out the reaction a very long-chain fatty acid + ATP + CoA = a very long-chain fatty acyl-CoA + AMP + diphosphate. The enzyme catalyses tetracosanoate + ATP + CoA = tetracosanoyl-CoA + AMP + diphosphate. It catalyses the reaction (4Z,7Z,10Z,13Z,16Z,19Z)-docosahexaenoate + ATP + CoA = (4Z,7Z,10Z,13Z,16Z,19Z)-docosahexaenoyl-CoA + AMP + diphosphate. The catalysed reaction is (25R)-3alpha,7alpha,12alpha-trihydroxy-5beta-cholestan-26-oate + ATP + CoA = (25R)-3alpha,7alpha,12alpha-trihydroxy-5beta-cholestan-26-oyl-CoA + AMP + diphosphate. Mediates the import of long-chain fatty acids (LCFA) into the cell by facilitating their transport across cell membranes, playing an important role in hepatic fatty acid uptake. Also functions as an acyl-CoA ligase catalyzing the ATP-dependent formation of fatty acyl-CoA using LCFA and very-long-chain fatty acids (VLCFA) as substrates, which prevents fatty acid efflux from cells and might drive more fatty acid uptake. Plays a pivotal role in regulating available LCFA substrates from exogenous sources in tissues undergoing high levels of beta-oxidation or triglyceride synthesis. Can also activate branched-chain fatty acids such as phytanic acid and pristanic acid. May contribute to the synthesis of sphingosine-1-phosphate. Does not activate C24 bile acids, cholate and chenodeoxycholate. In vitro, activates 3-alpha,7-alpha,12-alpha-trihydroxy-5-beta-cholestanate (THCA), the C27 precursor of cholic acid deriving from the de novo synthesis from cholesterol. However, it is not critical for THCA activation and bile synthesis in vivo. In terms of biological role, exhibits both long-chain fatty acids (LCFA) transport activity and acyl CoA synthetase towards very long-chain fatty acids. Shows a preference for generating CoA derivatives of n-3 fatty acids, which are preferentially trafficked into phosphatidylinositol. Its function is as follows. Exhibits long-chain fatty acids (LCFA) transport activity but lacks acyl CoA synthetase towards very long-chain fatty acids. The sequence is that of Long-chain fatty acid transport protein 2 (SLC27A2) from Homo sapiens (Human).